The chain runs to 336 residues: Protein-glutamate methylesterase/protein-glutamine glutaminase 1 (336 aa).

Positions Lys-2–Leu-119 constitute a Response regulatory domain. Asp-53 carries the 4-aspartylphosphate modification. One can recognise a CheB-type methylesterase domain in the interval Pro-143–Lys-336. Active-site residues include Ser-159, His-186, and Asp-279.

This sequence belongs to the CheB family. Post-translationally, phosphorylated by CheA. Phosphorylation of the N-terminal regulatory domain activates the methylesterase activity.

Its subcellular location is the cytoplasm. It carries out the reaction [protein]-L-glutamate 5-O-methyl ester + H2O = L-glutamyl-[protein] + methanol + H(+). The enzyme catalyses L-glutaminyl-[protein] + H2O = L-glutamyl-[protein] + NH4(+). In terms of biological role, involved in chemotaxis. Part of a chemotaxis signal transduction system that modulates chemotaxis in response to various stimuli. Catalyzes the demethylation of specific methylglutamate residues introduced into the chemoreceptors (methyl-accepting chemotaxis proteins or MCP) by CheR. Also mediates the irreversible deamidation of specific glutamine residues to glutamic acid. The polypeptide is Protein-glutamate methylesterase/protein-glutamine glutaminase 1 (Pseudomonas fluorescens (strain ATCC BAA-477 / NRRL B-23932 / Pf-5)).